The chain runs to 196 residues: Ribosome maturation factor RimP (196 aa).

Positions 163 to 196 are disordered; sequence GLAPSKPTGPAPKRPKPKTNSSSNEPAAKKPRAE.

It belongs to the RimP family.

It is found in the cytoplasm. Required for maturation of 30S ribosomal subunits. This Stenotrophomonas maltophilia (strain R551-3) protein is Ribosome maturation factor RimP.